The following is a 314-amino-acid chain: Transmembrane protein 248 (314 aa).

A helical membrane pass occupies residues 21-41 (VVFMISVSAMAIAFLTLGYFF). Residues 78-106 (LTNDTTTPESTMTSGQARASTQSPQALED) are disordered. Over residues 80–102 (NDTTTPESTMTSGQARASTQSPQ) the composition is skewed to polar residues. 3 helical membrane-spanning segments follow: residues 179–199 (QVVF…PVTV), 236–258 (FWCY…TVIV), and 270–290 (LMHT…YAVI).

This sequence belongs to the TMEM248 family.

It localises to the membrane. The protein is Transmembrane protein 248 (TMEM248) of Homo sapiens (Human).